Reading from the N-terminus, the 437-residue chain is Beta-1,3-galactosyl-O-glycosyl-glycoprotein beta-1,6-N-acetylglucosaminyltransferase 3 (437 aa).

Topologically, residues 1-12 (MTSWQRLCWHYR) are cytoplasmic. A helical; Signal-anchor for type II membrane protein membrane pass occupies residues 13 to 30 (LWTLGCYMLLAILALKLS). Over 31 to 437 (LRLKCDFDAM…RHKAIYGTEL (407 aa)) the chain is Lumenal. Cystine bridges form between Cys-70–Cys-227, Cys-161–Cys-381, Cys-182–Cys-209, and Cys-390–Cys-422. Asn-288 carries an N-linked (GlcNAc...) asparagine glycan.

This sequence belongs to the glycosyltransferase 14 family. In terms of processing, N-glycosylated.

It is found in the golgi apparatus membrane. The catalysed reaction is a 3-O-[beta-D-galactosyl-(1-&gt;3)-N-acetyl-alpha-D-galactosaminyl]-L-seryl-[protein] + UDP-N-acetyl-alpha-D-glucosamine = 3-O-{beta-D-galactosyl-(1-&gt;3)-[N-acetyl-beta-D-glucosaminyl-(1-&gt;6)]-N-acetyl-alpha-D-galactosaminyl}-L-seryl-[protein] + UDP + H(+). The enzyme catalyses a 3-O-[beta-D-galactosyl-(1-&gt;3)-N-acetyl-alpha-D-galactosaminyl]-L-threonyl-[protein] + UDP-N-acetyl-alpha-D-glucosamine = a 3-O-{beta-D-galactosyl-(1-&gt;3)-[N-acetyl-beta-D-glucosaminyl-(1-&gt;6)]-N-acetyl-alpha-D-galactosaminyl}-L-threonyl-[protein] + UDP + H(+). It carries out the reaction a beta-D-Gal-(1-&gt;4)-beta-D-GlcNAc-(1-&gt;3)-beta-D-Gal-(1-&gt;4)-beta-D-GlcNAc derivative + UDP-N-acetyl-alpha-D-glucosamine = a beta-D-Gal-(1-&gt;4)-beta-D-GlcNAc-(1-&gt;3)-[beta-D-GlcNAc-(1-&gt;6)]-beta-D-Gal-(1-&gt;4)-N-acetyl-beta-D-glucosaminyl derivative + UDP + H(+). It catalyses the reaction 3-O-[N-acetyl-beta-D-glucosaminyl-(1-&gt;3)-N-acetyl-alpha-D-galactosaminyl]-L-seryl-[protein] + UDP-N-acetyl-alpha-D-glucosamine = 3-O-[N-acetyl-beta-D-glucosaminyl-(1-&gt;3)-[N-acetyl-beta-D-glucosaminyl-(1-&gt;6)]-N-acetyl-alpha-D-galactosaminyl]-L-seryl-[protein] + UDP + H(+). The catalysed reaction is a 3-O-[N-acetyl-beta-D-glucosaminyl-(1-&gt;3)-N-acetyl-alpha-D-galactosaminyl]-L-threonyl-[protein] + UDP-N-acetyl-alpha-D-glucosamine = 3-O-[N-acetyl-beta-D-glucosaminyl-(1-&gt;3)-[N-acetyl-beta-D-glucosaminyl-(1-&gt;6)]-N-acetyl-alpha-D-galactosaminyl]-L-threonyl-[protein] + UDP + H(+). It participates in protein modification; protein glycosylation. Functionally, glycosyltransferase that can synthesize all known mucin beta 6 N-acetylglucosaminides. Mediates core 2 and core 4 O-glycan branching, 2 important steps in mucin-type biosynthesis. Also has I-branching enzyme activity by converting linear into branched poly-N-acetyllactosaminoglycans, leading to introduce the blood group I antigen during embryonic development. The protein is Beta-1,3-galactosyl-O-glycosyl-glycoprotein beta-1,6-N-acetylglucosaminyltransferase 3 (Gcnt3) of Mus musculus (Mouse).